Reading from the N-terminus, the 363-residue chain is 3-isopropylmalate dehydrogenase (363 aa).

78–91 (GPKWEHLPPDQQPE) contacts NAD(+). R99, R109, R138, and D227 together coordinate substrate. Residues D227, D251, and D255 each contribute to the Mg(2+) site. 285-297 (GSAPDIAGKNIAN) contacts NAD(+).

The protein belongs to the isocitrate and isopropylmalate dehydrogenases family. LeuB type 1 subfamily. In terms of assembly, homodimer. Requires Mg(2+) as cofactor. It depends on Mn(2+) as a cofactor.

The protein localises to the cytoplasm. The enzyme catalyses (2R,3S)-3-isopropylmalate + NAD(+) = 4-methyl-2-oxopentanoate + CO2 + NADH. Its pathway is amino-acid biosynthesis; L-leucine biosynthesis; L-leucine from 3-methyl-2-oxobutanoate: step 3/4. Requires K(+) ions for optimum activity. Functionally, catalyzes the oxidation of 3-carboxy-2-hydroxy-4-methylpentanoate (3-isopropylmalate) to 3-carboxy-4-methyl-2-oxopentanoate. The product decarboxylates to 4-methyl-2 oxopentanoate. The chain is 3-isopropylmalate dehydrogenase from Escherichia coli (strain K12).